A 560-amino-acid chain; its full sequence is MSETINTAAQFPSFEKPTVQFNEKGWGPCELPDTFKDVPYQPFSKNDRLGKICDWTNTSNNDKKYQNKYASSFGTGNQYSYYHEEDETTFHLVDTARVQKPPHQRGRFRNMRNSRSGRGRNARGGLNTHGMTTLSGKNVKARDPRHGRGMGKKFGHRGPPPKMRESSVAVRADWASIEEMDFPRLIKLSLPNIKEGVDIVTCGTLEYYDKTYDRINVKNEKPLQKIDRIVHTVTTTDDPVIRRLSKTVGNVFATDAILATIMCSTRSNYSWDIVIEKVGDKVFMDKRDHTEFDLLTVNESSVEPPTDDDSSCNSPRNLAIEATFINHNFSQQVLKTGDQEPKYKFEESNPFISEDEDIQVASVGYRYKKWELGSDIVLVARCEHDGVLQTPSGEPQFMTIKALNEWDSKLANGVEWRQKLDTQRGAVLANELRNNACKLAKWTVQAVLAGSDQLKLGYVSRINPRDHSRHVILGTQQFKPHEFATQINLSMDNAWGILRCIIDLVMKQKDGKYLIMKDPNKPIIRLYDIPDNTFDSDDSDDGEGDDEGFQQVYNYAHNKI.

The tract at residues 98–166 (VQKPPHQRGR…RGPPPKMRES (69 aa)) is disordered. A compositionally biased stretch (basic residues) spans 100 to 121 (KPPHQRGRFRNMRNSRSGRGRN). The residue at position 128 (Thr128) is a Phosphothreonine. Basic residues predominate over residues 147-156 (GRGMGKKFGH). Residues 291–305 (EFDLLTVNESSVEPP) are RNA gate.

This sequence belongs to the eIF-3 subunit D family. In terms of assembly, component of the eukaryotic translation initiation factor 3 (eIF-3) complex. The eIF-3 complex interacts with pix.

Its subcellular location is the cytoplasm. Its function is as follows. mRNA cap-binding component of the eukaryotic translation initiation factor 3 (eIF-3) complex, which is involved in protein synthesis of a specialized repertoire of mRNAs and, together with other initiation factors, stimulates binding of mRNA and methionyl-tRNAi to the 40S ribosome. The eIF-3 complex specifically targets and initiates translation of a subset of mRNAs involved in cell proliferation. In the eIF-3 complex, eif3d specifically recognizes and binds the 7-methylguanosine cap of a subset of mRNAs. The sequence is that of Eukaryotic translation initiation factor 3 subunit D-1 from Drosophila sechellia (Fruit fly).